The primary structure comprises 194 residues: SRP-independent targeting protein 3 homolog (194 aa).

A run of 2 helical transmembrane segments spans residues 43 to 63 (ILYATVNIVQIGIFLYTKIII) and 110 to 130 (LVTIATTLFMHLYMGYAPPLL).

Belongs to the PHO88 family.

The protein localises to the endoplasmic reticulum membrane. Its function is as follows. May function in a SRP (signal recognition particle) and GET (guided entry of tail-anchored proteins) independent pathway for targeting a broad range of substrate proteins to the endoplasmic reticulum. Involved in inorganic phosphate uptake. Also involved in telomere length regulation and maintenance. The chain is SRP-independent targeting protein 3 homolog from Schizosaccharomyces pombe (strain 972 / ATCC 24843) (Fission yeast).